A 364-amino-acid polypeptide reads, in one-letter code: Chorismate synthase (364 aa).

Arg-48 is a binding site for NADP(+). Residues 131–133 (RAS), 243–244 (NA), Gly-288, 303–307 (KPTSS), and Arg-329 contribute to the FMN site.

The protein belongs to the chorismate synthase family. Homotetramer. Requires FMNH2 as cofactor.

It catalyses the reaction 5-O-(1-carboxyvinyl)-3-phosphoshikimate = chorismate + phosphate. It functions in the pathway metabolic intermediate biosynthesis; chorismate biosynthesis; chorismate from D-erythrose 4-phosphate and phosphoenolpyruvate: step 7/7. In terms of biological role, catalyzes the anti-1,4-elimination of the C-3 phosphate and the C-6 proR hydrogen from 5-enolpyruvylshikimate-3-phosphate (EPSP) to yield chorismate, which is the branch point compound that serves as the starting substrate for the three terminal pathways of aromatic amino acid biosynthesis. This reaction introduces a second double bond into the aromatic ring system. This chain is Chorismate synthase, found in Bartonella bacilliformis (strain ATCC 35685 / KC583 / Herrer 020/F12,63).